The chain runs to 179 residues: Large ribosomal subunit protein bL9 (179 aa).

This sequence belongs to the bacterial ribosomal protein bL9 family.

In terms of biological role, binds to the 23S rRNA. The protein is Large ribosomal subunit protein bL9 of Bartonella bacilliformis (strain ATCC 35685 / KC583 / Herrer 020/F12,63).